The primary structure comprises 491 residues: Probable cytosol aminopeptidase (491 aa).

Residues K264 and D269 each coordinate Mn(2+). K276 is a catalytic residue. Mn(2+) is bound by residues D287, D346, and E348. The active site involves R350.

Belongs to the peptidase M17 family. Mn(2+) serves as cofactor.

It localises to the cytoplasm. The enzyme catalyses Release of an N-terminal amino acid, Xaa-|-Yaa-, in which Xaa is preferably Leu, but may be other amino acids including Pro although not Arg or Lys, and Yaa may be Pro. Amino acid amides and methyl esters are also readily hydrolyzed, but rates on arylamides are exceedingly low.. It carries out the reaction Release of an N-terminal amino acid, preferentially leucine, but not glutamic or aspartic acids.. Presumably involved in the processing and regular turnover of intracellular proteins. Catalyzes the removal of unsubstituted N-terminal amino acids from various peptides. This is Probable cytosol aminopeptidase from Xylella fastidiosa (strain M12).